We begin with the raw amino-acid sequence, 110 residues long: Disintegrin jerdostatin (110 aa).

Residues methionine 1 to serine 20 form the signal peptide. A propeptide spanning residues lysine 21–leucine 67 is cleaved from the precursor. Positions serine 27–glycine 110 constitute a Disintegrin domain. 4 disulfides stabilise this stretch: cysteine 68–cysteine 77, cysteine 73–cysteine 96, cysteine 74–cysteine 101, and cysteine 86–cysteine 103. Positions arginine 88–serine 90 match the Cell attachment site; atypical (RTS) motif.

It belongs to the disintegrin family. Short disintegrin subfamily. As to quaternary structure, monomer. Two conformers are found, they may differ by their disulfide bond connectivities. Conformer 2 is 33 times less active than conformer 1. Conformer 2 may represent a non-native protein. Post-translationally, the C-terminal dipeptide may be post-translationally removed, as seen in disintegrins that possess a KTS integrin-binding motif. In terms of tissue distribution, expressed by the venom gland.

It is found in the secreted. In terms of biological role, recombinant protein inhibits the adhesion of alpha-1/beta-1-K562 (ITGA1/ITGB1) cells to collagen IV with an IC(50) of 80 nM. This chain is Disintegrin jerdostatin, found in Protobothrops jerdonii (Jerdon's pitviper).